A 114-amino-acid chain; its full sequence is MKTIIVFLSLLVLATKFGDANEGVNQEQMKEVIQNEFREDFLNEMAPMSLLQQLEAIESTLLEKEADRNSRQKRCLGENVPCGDFPCCGKLVCQKTFGYGWLYKSPYCVKPSNG.

The N-terminal stretch at 1–20 is a signal peptide; sequence MKTIIVFLSLLVLATKFGDA. Positions 21–74 are excised as a propeptide; the sequence is NEGVNQEQMKEVIQNEFREDFLNEMAPMSLLQQLEAIESTLLEKEADRNSRQKR. 3 disulfides stabilise this stretch: cysteine 75–cysteine 88, cysteine 82–cysteine 93, and cysteine 87–cysteine 108.

The protein belongs to the neurotoxin 14 (magi-1) family. 03 (ICK-30-40) subfamily. In terms of tissue distribution, expressed by the venom gland.

The protein localises to the secreted. Its function is as follows. Ion channel inhibitor. The chain is U17-barytoxin-Tl1a from Trittame loki (Brush-footed trapdoor spider).